The chain runs to 672 residues: Flap endonuclease 1 (672 aa).

Residues 1–106 form an N-domain region; that stretch reads MGIKGLIGFL…QTLAKRKLLR (106 aa). Mg(2+) is bound at residue aspartate 34. 2 residues coordinate DNA: arginine 47 and arginine 72. Mg(2+)-binding residues include aspartate 88, glutamate 160, glutamate 162, aspartate 181, and aspartate 183. Positions 124-252 are I-domain; sequence AIRKYVGRTV…KTAYNLIKKH (129 aa). A DNA-binding site is contributed by glutamate 160. Residues glycine 230 and aspartate 232 each contribute to the DNA site. Position 232 (aspartate 232) interacts with Mg(2+). Residues 327 to 335 are interaction with PCNA; it reads TQLSLKSFF. Residues 361–436 are disordered; that stretch reads VESAVDSTSD…DAKKRNKRVP (76 aa). A compositionally biased stretch (basic and acidic residues) spans 370–382; it reads DDGKDEVPSDDKV.

This sequence belongs to the XPG/RAD2 endonuclease family. FEN1 subfamily. As to quaternary structure, interacts with PCNA. Three molecules of FEN1 bind to one PCNA trimer with each molecule binding to one PCNA monomer. PCNA stimulates the nuclease activity without altering cleavage specificity. The cofactor is Mg(2+). Phosphorylated. Phosphorylation upon DNA damage induces relocalization to the nuclear plasma.

The protein localises to the nucleus. It localises to the nucleolus. The protein resides in the nucleoplasm. It is found in the mitochondrion. Functionally, structure-specific nuclease with 5'-flap endonuclease and 5'-3' exonuclease activities involved in DNA replication and repair. During DNA replication, cleaves the 5'-overhanging flap structure that is generated by displacement synthesis when DNA polymerase encounters the 5'-end of a downstream Okazaki fragment. It enters the flap from the 5'-end and then tracks to cleave the flap base, leaving a nick for ligation. Also involved in the long patch base excision repair (LP-BER) pathway, by cleaving within the apurinic/apyrimidinic (AP) site-terminated flap. Acts as a genome stabilization factor that prevents flaps from equilibrating into structures that lead to duplications and deletions. Also possesses 5'-3' exonuclease activity on nicked or gapped double-stranded DNA, and exhibits RNase H activity. Also involved in replication and repair of rDNA and in repairing mitochondrial DNA. The chain is Flap endonuclease 1 from Babesia bovis.